A 203-amino-acid chain; its full sequence is Corrinoid adenosyltransferase (203 aa).

Residues 1–21 (MNESPEKDQRHRERMERKKAV) are disordered. 41-47 (GNGKGKS) is a binding site for ATP.

Belongs to the Cob(I)alamin adenosyltransferase family. Monomer. Mn(2+) is required as a cofactor.

The protein resides in the cytoplasm. It carries out the reaction 2 cob(II)yrinate a,c diamide + reduced [electron-transfer flavoprotein] + 2 ATP = 2 adenosylcob(III)yrinate a,c-diamide + 2 triphosphate + oxidized [electron-transfer flavoprotein] + 3 H(+). The catalysed reaction is 2 cob(II)alamin + reduced [electron-transfer flavoprotein] + 2 ATP = 2 adenosylcob(III)alamin + 2 triphosphate + oxidized [electron-transfer flavoprotein] + 3 H(+). It participates in cofactor biosynthesis; adenosylcobalamin biosynthesis; adenosylcobalamin from cob(II)yrinate a,c-diamide: step 2/7. Its function is as follows. Required for both de novo synthesis of the corrin ring for the assimilation of exogenous corrinoids. Participates in the adenosylation of a variety of incomplete and complete corrinoids. This chain is Corrinoid adenosyltransferase (cobO), found in Pseudomonas aeruginosa (strain ATCC 15692 / DSM 22644 / CIP 104116 / JCM 14847 / LMG 12228 / 1C / PRS 101 / PAO1).